Consider the following 208-residue polypeptide: Thymidylate kinase (208 aa).

Residue 10–17 participates in ATP binding; the sequence is GGEGAGKS.

This sequence belongs to the thymidylate kinase family.

The catalysed reaction is dTMP + ATP = dTDP + ADP. Functionally, phosphorylation of dTMP to form dTDP in both de novo and salvage pathways of dTTP synthesis. This Alcanivorax borkumensis (strain ATCC 700651 / DSM 11573 / NCIMB 13689 / SK2) protein is Thymidylate kinase.